The following is a 417-amino-acid chain: Secernin-3 (417 aa).

A propeptide spanning residues 1–5 (MYPRS) is cleaved from the precursor. Residue Cys-6 is part of the active site. Cys-6 is modified (glyoxylic acid (Cys); alternate). The residue at position 6 (Cys-6) is a Pyruvic acid (Cys); alternate.

It belongs to the peptidase C69 family. Secernin subfamily.

Its function is as follows. Plays a role in thermal nociception. In Danio rerio (Zebrafish), this protein is Secernin-3 (scrn3).